The following is a 154-amino-acid chain: 6,7-dimethyl-8-ribityllumazine synthase (154 aa).

Residues Phe22, 56-58 (AFE), and 80-82 (AVI) each bind 5-amino-6-(D-ribitylamino)uracil. (2S)-2-hydroxy-3-oxobutyl phosphate is bound at residue 85 to 86 (AT). His88 acts as the Proton donor in catalysis. Phe113 is a binding site for 5-amino-6-(D-ribitylamino)uracil. Residue Arg127 participates in (2S)-2-hydroxy-3-oxobutyl phosphate binding.

It belongs to the DMRL synthase family.

The catalysed reaction is (2S)-2-hydroxy-3-oxobutyl phosphate + 5-amino-6-(D-ribitylamino)uracil = 6,7-dimethyl-8-(1-D-ribityl)lumazine + phosphate + 2 H2O + H(+). The protein operates within cofactor biosynthesis; riboflavin biosynthesis; riboflavin from 2-hydroxy-3-oxobutyl phosphate and 5-amino-6-(D-ribitylamino)uracil: step 1/2. Catalyzes the formation of 6,7-dimethyl-8-ribityllumazine by condensation of 5-amino-6-(D-ribitylamino)uracil with 3,4-dihydroxy-2-butanone 4-phosphate. This is the penultimate step in the biosynthesis of riboflavin. This Clostridium botulinum (strain ATCC 19397 / Type A) protein is 6,7-dimethyl-8-ribityllumazine synthase.